Here is a 944-residue protein sequence, read N- to C-terminus: Protocadherin gamma-C5 (944 aa).

Positions 1–29 are cleaved as a signal peptide; the sequence is MGPKTLPQLAGKWQVLCMLSLCCWGWVSG. 6 consecutive Cadherin domains span residues 30-133, 134-242, 243-350, 351-454, 455-564, and 571-677; these read QLRY…SPSF, ATPE…APTF, QSSV…APEV, LLAS…APRF, NQQL…APAV, and WEHS…MPKS. Topologically, residues 30 to 693 are extracellular; it reads QLRYSVVEES…PPERSDLTLY (664 aa). Residues Asn-265, Asn-443, and Asn-547 are each glycosylated (N-linked (GlcNAc...) asparagine). The helical transmembrane segment at 694 to 714 threads the bilayer; sequence LIVALATVSLLSLVTFTFLSA. The Cytoplasmic portion of the chain corresponds to 715–944; that stretch reads KCLQGNADGD…KKKSGKKEKK (230 aa). Disordered stretches follow at residues 722-747, 812-853, and 914-944; these read DGDG…QSSP, SNTL…WPNN, and ATLT…KEKK. Residues 820 to 853 are compositionally biased toward polar residues; that stretch reads QQAPPNTDWRFSQAQRPGTSGSQNGDDTGTWPNN. Residues 934–944 are compositionally biased toward basic residues; the sequence is NKKKSGKKEKK.

Its subcellular location is the cell membrane. Functionally, potential calcium-dependent cell-adhesion protein. May be involved in the establishment and maintenance of specific neuronal connections in the brain. This is Protocadherin gamma-C5 (PCDHGC5) from Homo sapiens (Human).